The following is a 312-amino-acid chain: Bifunctional pinoresinol-lariciresinol reductase (312 aa).

Residues 10 to 16 (GGTGYIG), Arg-35, and Lys-44 each bind NADP(+). The Proton acceptor role is filled by Lys-136. Arg-140 contributes to the NADP(+) binding site. A substrate-binding site is contributed by His-268.

It belongs to the NmrA-type oxidoreductase family. Isoflavone reductase subfamily. In terms of assembly, dimer. Expressed in seed coats, but not in embryos, leaves, stems and roots.

Functionally, reductase involved in lignan biosynthesis. Catalyzes the sequential conversion of pinoresinol into lariciresinol and of lariciresinol into secoisolariciresinol. Abstracts the 4R-hydride from the NADPH cofactor during catalysis. The polypeptide is Bifunctional pinoresinol-lariciresinol reductase (Linum usitatissimum (Flax)).